Here is a 169-residue protein sequence, read N- to C-terminus: MSPGIGMPELLVVLVLALVVVGPQQLPVMMRKVGQMMAQARAMAKDFQNSFEEIGRETELSELRREIDALKQANPINQIHGELDKAARGTQDDDIRALKLKHVEQNQAETDADKAAKAAKLAALDSEGPQSTTPEADARADAAASADETERAAPVETTPAKPVDEIKGR.

A helical membrane pass occupies residues 2–22 (SPGIGMPELLVVLVLALVVVG). The disordered stretch occupies residues 106 to 169 (NQAETDADKA…AKPVDEIKGR (64 aa)).

The protein belongs to the TatB family. In terms of assembly, the Tat system comprises two distinct complexes: a TatABC complex, containing multiple copies of TatA, TatB and TatC subunits, and a separate TatA complex, containing only TatA subunits. Substrates initially bind to the TatABC complex, which probably triggers association of the separate TatA complex to form the active translocon.

It localises to the cell inner membrane. Its function is as follows. Part of the twin-arginine translocation (Tat) system that transports large folded proteins containing a characteristic twin-arginine motif in their signal peptide across membranes. Together with TatC, TatB is part of a receptor directly interacting with Tat signal peptides. TatB may form an oligomeric binding site that transiently accommodates folded Tat precursor proteins before their translocation. This is Sec-independent protein translocase protein TatB from Maricaulis maris (strain MCS10) (Caulobacter maris).